Here is a 274-residue protein sequence, read N- to C-terminus: 4-hydroxy-tetrahydrodipicolinate reductase (274 aa).

NAD(+) is bound at residue 12-17 (GAAGRM). R39 lines the NADP(+) pocket. NAD(+)-binding positions include 102-104 (GTT) and 126-129 (SGNM). The active-site Proton donor/acceptor is H160. H161 lines the (S)-2,3,4,5-tetrahydrodipicolinate pocket. Residue K164 is the Proton donor of the active site. Residue 170 to 171 (GT) participates in (S)-2,3,4,5-tetrahydrodipicolinate binding.

Belongs to the DapB family.

It is found in the cytoplasm. The catalysed reaction is (S)-2,3,4,5-tetrahydrodipicolinate + NAD(+) + H2O = (2S,4S)-4-hydroxy-2,3,4,5-tetrahydrodipicolinate + NADH + H(+). It carries out the reaction (S)-2,3,4,5-tetrahydrodipicolinate + NADP(+) + H2O = (2S,4S)-4-hydroxy-2,3,4,5-tetrahydrodipicolinate + NADPH + H(+). The protein operates within amino-acid biosynthesis; L-lysine biosynthesis via DAP pathway; (S)-tetrahydrodipicolinate from L-aspartate: step 4/4. Functionally, catalyzes the conversion of 4-hydroxy-tetrahydrodipicolinate (HTPA) to tetrahydrodipicolinate. The protein is 4-hydroxy-tetrahydrodipicolinate reductase of Rhizobium rhizogenes (strain K84 / ATCC BAA-868) (Agrobacterium radiobacter).